A 265-amino-acid polypeptide reads, in one-letter code: Hydroxyethylthiazole kinase 2 (265 aa).

Residue Met-39 participates in substrate binding. Lys-115 and Thr-168 together coordinate ATP. Residue Gly-195 coordinates substrate.

The protein belongs to the Thz kinase family. Requires Mg(2+) as cofactor.

The catalysed reaction is 5-(2-hydroxyethyl)-4-methylthiazole + ATP = 4-methyl-5-(2-phosphooxyethyl)-thiazole + ADP + H(+). It participates in cofactor biosynthesis; thiamine diphosphate biosynthesis; 4-methyl-5-(2-phosphoethyl)-thiazole from 5-(2-hydroxyethyl)-4-methylthiazole: step 1/1. Its function is as follows. Catalyzes the phosphorylation of the hydroxyl group of 4-methyl-5-beta-hydroxyethylthiazole (THZ). This chain is Hydroxyethylthiazole kinase 2, found in Clostridium botulinum (strain ATCC 19397 / Type A).